Reading from the N-terminus, the 422-residue chain is Cyclin-A2 (422 aa).

N-acetylmethionine is present on Met1. Residues 1-62 (MPGTSRHSGR…APQQKLKTRR (62 aa)) are disordered. Ser5 is modified (phosphoserine).

The protein belongs to the cyclin family. Cyclin AB subfamily. Interacts with the CDK1 and CDK2 protein kinases to form serine/threonine kinase holoenzyme complexes. Interacts with CDK1 (hyperphosphorylated form in G1 and underphosphorylated forms in S and G2). Interacts with CDK2; the interaction increases from G1 to G2. Interacts (associated with CDK2 but not with CDK1) with SCAPER; regulates the activity of CCNA2/CDK2 by transiently maintaining CCNA2 in the cytoplasm. Forms a ternary complex with CDK2 and CDKN1B; CDKN1B inhibits the kinase activity of CDK2 through conformational rearrangements. Interacts with INCA1. In terms of assembly, (Microbial infection) Interacts with mouse cytomegalovirus/MCMV kinase M97; this interaction sequesters CCNA2 to the cytoplasm. Post-translationally, polyubiquitinated via 'Lys-11'-linked ubiquitin by the anaphase-promoting complex (APC/C), leading to its degradation by the proteasome. Deubiquitinated and stabilized by USP37 enables entry into S phase. Ubiquitinated during the G1 phase by the SCF(FBXO31) complex, leading to its proteasomal degradation. As to expression, ubiquitous. In the testis, expressed in germ cells and in the ovary, in both germline and somatic cells.

Its subcellular location is the nucleus. The protein resides in the cytoplasm. Its function is as follows. Cyclin which controls both the G1/S and the G2/M transition phases of the cell cycle. Functions through the formation of specific serine/threonine kinase holoenzyme complexes with the cyclin-dependent protein kinases CDK1 and CDK2. The cyclin subunit confers the substrate specificity of these complexes and differentially interacts with and activates CDK1 and CDK2 throughout the cell cycle. This Mus musculus (Mouse) protein is Cyclin-A2.